A 467-amino-acid polypeptide reads, in one-letter code: ATP synthase subunit beta, chloroplastic (467 aa).

Position 149–156 (149–156 (GGAGVGKT)) interacts with ATP.

It belongs to the ATPase alpha/beta chains family. As to quaternary structure, F-type ATPases have 2 components, CF(1) - the catalytic core - and CF(0) - the membrane proton channel. CF(1) has five subunits: alpha(3), beta(3), gamma(1), delta(1), epsilon(1). CF(0) has four main subunits: a(1), b(1), b'(1) and c(9-12).

The protein localises to the plastid. It localises to the chloroplast thylakoid membrane. It carries out the reaction ATP + H2O + 4 H(+)(in) = ADP + phosphate + 5 H(+)(out). Functionally, produces ATP from ADP in the presence of a proton gradient across the membrane. The catalytic sites are hosted primarily by the beta subunits. The protein is ATP synthase subunit beta, chloroplastic of Cyanidioschyzon merolae (strain NIES-3377 / 10D) (Unicellular red alga).